The chain runs to 523 residues: 2-isopropylmalate synthase (523 aa).

The Pyruvate carboxyltransferase domain maps to 5–267; sequence VIIFDTTLRD…ETGINAKEIH (263 aa). Residues aspartate 14, histidine 202, histidine 204, and asparagine 238 each coordinate Mn(2+). Residues 392 to 523 are regulatory domain; the sequence is GLQQLVVHSD…KQARTELGGV (132 aa).

It belongs to the alpha-IPM synthase/homocitrate synthase family. LeuA type 1 subfamily. In terms of assembly, homodimer. Mn(2+) serves as cofactor.

Its subcellular location is the cytoplasm. It catalyses the reaction 3-methyl-2-oxobutanoate + acetyl-CoA + H2O = (2S)-2-isopropylmalate + CoA + H(+). The protein operates within amino-acid biosynthesis; L-leucine biosynthesis; L-leucine from 3-methyl-2-oxobutanoate: step 1/4. Its function is as follows. Catalyzes the condensation of the acetyl group of acetyl-CoA with 3-methyl-2-oxobutanoate (2-ketoisovalerate) to form 3-carboxy-3-hydroxy-4-methylpentanoate (2-isopropylmalate). This is 2-isopropylmalate synthase from Shewanella loihica (strain ATCC BAA-1088 / PV-4).